Reading from the N-terminus, the 949-residue chain is Nonsense-mediated mRNA decay factor SMG8 (949 aa).

Disordered regions lie at residues 564–607 (SGAR…LSPT), 624–652 (NESQ…DTEN), and 748–768 (PKQQ…QQRW). Residues 571-581 (EGDDEPEDEVV) show a composition bias toward acidic residues. Positions 594–607 (NTASNGCSQPLSPT) are enriched in polar residues. The segment covering 624–648 (NESQASSEQLSNSEQNTSSSGTSSA) has biased composition (low complexity). The segment covering 749-768 (KQQHHTHHQQQHPGKKQQRW) has biased composition (basic residues).

Belongs to the SMG8 family.

Its function is as follows. Involved in nonsense-mediated decay (NMD) of mRNAs containing premature stop codons. Probable component of kinase complex containing nonC and recruited to stalled ribosomes. The sequence is that of Nonsense-mediated mRNA decay factor SMG8 from Drosophila erecta (Fruit fly).